We begin with the raw amino-acid sequence, 554 residues long: Chaperonin GroEL (554 aa).

Residues 30 to 33, K51, 87 to 91, G415, 479 to 481, and D495 contribute to the ATP site; these read TLGP, DGTTT, and NAA.

The protein belongs to the chaperonin (HSP60) family. Forms a cylinder of 14 subunits composed of two heptameric rings stacked back-to-back. Interacts with the co-chaperonin GroES.

Its subcellular location is the cytoplasm. The catalysed reaction is ATP + H2O + a folded polypeptide = ADP + phosphate + an unfolded polypeptide.. Together with its co-chaperonin GroES, plays an essential role in assisting protein folding. The GroEL-GroES system forms a nano-cage that allows encapsulation of the non-native substrate proteins and provides a physical environment optimized to promote and accelerate protein folding. The chain is Chaperonin GroEL from Nitrosococcus oceani (strain ATCC 19707 / BCRC 17464 / JCM 30415 / NCIMB 11848 / C-107).